The sequence spans 366 residues: Ribosomal RNA large subunit methyltransferase M (366 aa).

Residues serine 188, 221 to 224 (CPGG), aspartate 240, aspartate 260, and aspartate 277 contribute to the S-adenosyl-L-methionine site. Catalysis depends on lysine 306, which acts as the Proton acceptor.

This sequence belongs to the class I-like SAM-binding methyltransferase superfamily. RNA methyltransferase RlmE family. RlmM subfamily. In terms of assembly, monomer.

The protein localises to the cytoplasm. The enzyme catalyses cytidine(2498) in 23S rRNA + S-adenosyl-L-methionine = 2'-O-methylcytidine(2498) in 23S rRNA + S-adenosyl-L-homocysteine + H(+). In terms of biological role, catalyzes the 2'-O-methylation at nucleotide C2498 in 23S rRNA. This Escherichia coli O139:H28 (strain E24377A / ETEC) protein is Ribosomal RNA large subunit methyltransferase M.